The following is a 536-amino-acid chain: Glyco-Gag protein (536 aa).

The Cytoplasmic segment spans residues 1-54 (MSGASSGTATGARLFGISSVLGEYRVLIGDEGAGPSRSPSEVSFSVWYRSRAAR). The helical transmembrane segment at 55-75 (LVILCLVASFLVPCLTFLIAE) threads the bilayer. The Extracellular segment spans residues 76–536 (TVMGQTVTTP…TQNRNKDREE (461 aa)). Residue N137 is glycosylated (N-linked (GlcNAc...) asparagine; by host). Disordered stretches follow at residues 174–284 (VRPF…NNRP) and 494–536 (ETPE…DREE). Pro residues predominate over residues 177-198 (FLPPPKPPTPLPQPLSPQPSAP). The segment covering 199–209 (PTSSLYPVLPK) has biased composition (low complexity). Pro residues-rich tracts occupy residues 210–223 (TNPPKPPVLPPDPS) and 233–246 (EPPPYPGGHGPPPS). The span at 494 to 511 (ETPEEREERLWQRQEERD) shows a compositional bias: basic and acidic residues.

Glycosylated by host. In terms of processing, cleaved by host near the middle of the molecule, releasing the c-terminal half containing capsid and nucleoprotein domains op GAG.

It localises to the host cell membrane. Plays a role in viral particle release. Presumably acts by facilitating the fission of the virion bud at the cell surface. The protein is Glyco-Gag protein of Feline sarcoma virus (strain McDonough).